Here is a 257-residue protein sequence, read N- to C-terminus: NAD-capped RNA hydrolase NudC (257 aa).

Substrate is bound by residues K25 and R69. C98 and C101 together coordinate Zn(2+). E111 serves as a coordination point for substrate. Zn(2+) contacts are provided by C116 and C119. Residue Y124 coordinates substrate. The Nudix hydrolase domain maps to P125–T248. A158, E174, and E178 together coordinate a divalent metal cation. Positions G159–G180 match the Nudix box motif. Substrate is bound at residue Q192 to S199. E219 contributes to the a divalent metal cation binding site. A241 serves as a coordination point for substrate.

Belongs to the Nudix hydrolase family. NudC subfamily. In terms of assembly, homodimer. The cofactor is Mg(2+). Mn(2+) is required as a cofactor. Requires Zn(2+) as cofactor.

The catalysed reaction is a 5'-end NAD(+)-phospho-ribonucleoside in mRNA + H2O = a 5'-end phospho-adenosine-phospho-ribonucleoside in mRNA + beta-nicotinamide D-ribonucleotide + 2 H(+). The enzyme catalyses NAD(+) + H2O = beta-nicotinamide D-ribonucleotide + AMP + 2 H(+). It catalyses the reaction NADH + H2O = reduced beta-nicotinamide D-ribonucleotide + AMP + 2 H(+). MRNA decapping enzyme that specifically removes the nicotinamide adenine dinucleotide (NAD) cap from a subset of mRNAs by hydrolyzing the diphosphate linkage to produce nicotinamide mononucleotide (NMN) and 5' monophosphate mRNA. The NAD-cap is present at the 5'-end of some mRNAs and stabilizes RNA against 5'-processing. Has preference for mRNAs with a 5'-end purine. Catalyzes the hydrolysis of a broad range of dinucleotide pyrophosphates. The sequence is that of NAD-capped RNA hydrolase NudC from Escherichia fergusonii (strain ATCC 35469 / DSM 13698 / CCUG 18766 / IAM 14443 / JCM 21226 / LMG 7866 / NBRC 102419 / NCTC 12128 / CDC 0568-73).